The sequence spans 477 residues: tRNA-2-methylthio-N(6)-dimethylallyladenosine synthase (477 aa).

Positions 9–129 (RKLHIKSYGC…LPQLLARAKT (121 aa)) constitute an MTTase N-terminal domain. The [4Fe-4S] cluster site is built by Cys18, Cys54, Cys92, Cys170, Cys174, and Cys177. One can recognise a Radical SAM core domain in the interval 156 to 386 (RSRGISAFVT…QLQNLIDSQQ (231 aa)). The region spanning 391–453 (RTALGRTIDV…RYSLFGTLAS (63 aa)) is the TRAM domain. Positions 454–477 (KPTSGEPSNHAATGGAQFQTTAGA) are disordered. The span at 464-477 (AATGGAQFQTTAGA) shows a compositional bias: low complexity.

The protein belongs to the methylthiotransferase family. MiaB subfamily. Monomer. It depends on [4Fe-4S] cluster as a cofactor.

It localises to the cytoplasm. The catalysed reaction is N(6)-dimethylallyladenosine(37) in tRNA + (sulfur carrier)-SH + AH2 + 2 S-adenosyl-L-methionine = 2-methylsulfanyl-N(6)-dimethylallyladenosine(37) in tRNA + (sulfur carrier)-H + 5'-deoxyadenosine + L-methionine + A + S-adenosyl-L-homocysteine + 2 H(+). In terms of biological role, catalyzes the methylthiolation of N6-(dimethylallyl)adenosine (i(6)A), leading to the formation of 2-methylthio-N6-(dimethylallyl)adenosine (ms(2)i(6)A) at position 37 in tRNAs that read codons beginning with uridine. In Nitrobacter winogradskyi (strain ATCC 25391 / DSM 10237 / CIP 104748 / NCIMB 11846 / Nb-255), this protein is tRNA-2-methylthio-N(6)-dimethylallyladenosine synthase.